Here is a 925-residue protein sequence, read N- to C-terminus: Periplasmic nitrate reductase (925 aa).

Residues 1–30 (MDRREFIKSSAAAAACSAAGIAVPSSLSAA) constitute a signal peptide (tat-type signal). The region spanning 36–92 (WRWDKSACRFCGTGCGIMVATKNGKIVAVKGDPLAPVNRGLNCIKGYFNAKIMYGED) is the 4Fe-4S Mo/W bis-MGD-type domain. Cys43, Cys46, Cys50, and Cys78 together coordinate [4Fe-4S] cluster. Mo-bis(molybdopterin guanine dinucleotide)-binding positions include Lys80, Gln148, Asn173, Cys177, 210-217 (WGANMAEM), Met418, Gln422, Asn528, 553-554 (SD), Lys576, Asp603, and 815-824 (TGRVLEHWHS). Trp891 contributes to the substrate binding site. Asn899 and Lys916 together coordinate Mo-bis(molybdopterin guanine dinucleotide).

The protein belongs to the prokaryotic molybdopterin-containing oxidoreductase family. NasA/NapA/NarB subfamily. In terms of assembly, component of the periplasmic nitrate reductase NapAB complex composed of NapA and NapB. [4Fe-4S] cluster is required as a cofactor. The cofactor is Mo-bis(molybdopterin guanine dinucleotide). Post-translationally, predicted to be exported by the Tat system. The position of the signal peptide cleavage has not been experimentally proven.

Its subcellular location is the periplasm. The enzyme catalyses 2 Fe(II)-[cytochrome] + nitrate + 2 H(+) = 2 Fe(III)-[cytochrome] + nitrite + H2O. In terms of biological role, catalytic subunit of the periplasmic nitrate reductase complex NapAB. Receives electrons from NapB and catalyzes the reduction of nitrate to nitrite. The polypeptide is Periplasmic nitrate reductase (Campylobacter fetus subsp. fetus (strain 82-40)).